The sequence spans 24 residues: Ascaphin-4 (24 aa).

As to expression, expressed by the skin glands.

It is found in the secreted. Its function is as follows. Antimicrobial peptide that shows higher potency against Gram-negative bacteria than against Gram-positive bacteria. Has a very week hemolytic activity. The sequence is that of Ascaphin-4 from Ascaphus truei (Coastal tailed frog).